A 1046-amino-acid polypeptide reads, in one-letter code: uncharacterized protein (1046 aa).

The span at 594–615 (LNSIPSDSSSSGSSRKSSPRGS) shows a compositional bias: low complexity. Positions 594-622 (LNSIPSDSSSSGSSRKSSPRGSPNLGEAP) are disordered.

This is an uncharacterized protein from Invertebrate iridescent virus 6 (IIV-6).